The following is a 191-amino-acid chain: GDP-mannose pyrophosphatase (191 aa).

Residues Tyr-17, 38–40 (KRE), Arg-67, and 85–87 (AGL) each bind GDP-alpha-D-mannose. The Nudix hydrolase domain maps to 43–180 (DRGNGATILL…EIRDGKTVLL (138 aa)). The Mg(2+) site is built by Ala-85, Glu-100, and Glu-104. Positions 86 to 106 (GLLDNDEPEVCIRKEAIEETG) match the Nudix box motif. Residues Glu-104, Glu-127, 150-151 (DE), and Lys-176 contribute to the GDP-alpha-D-mannose site. Glu-151 contributes to the Mg(2+) binding site.

The protein belongs to the Nudix hydrolase family. NudK subfamily. As to quaternary structure, homodimer. Requires Mg(2+) as cofactor.

The catalysed reaction is GDP-alpha-D-mannose + H2O = alpha-D-mannose 1-phosphate + GMP + 2 H(+). Its function is as follows. Nucleoside diphosphate sugar hydrolase that hydrolyzes GDP-mannose as its preferred substrate, yielding GMP and mannose-1-phosphate. In Escherichia coli (strain K12 / DH10B), this protein is GDP-mannose pyrophosphatase (nudK).